Here is a 358-residue protein sequence, read N- to C-terminus: Magnesium-protoporphyrin IX monomethyl ester [oxidative] cyclase 2 (358 aa).

It belongs to the AcsF family. Requires Fe cation as cofactor.

The catalysed reaction is Mg-protoporphyrin IX 13-monomethyl ester + 3 NADPH + 3 O2 + 2 H(+) = 3,8-divinyl protochlorophyllide a + 3 NADP(+) + 5 H2O. It participates in porphyrin-containing compound metabolism; chlorophyll biosynthesis (light-independent). In terms of biological role, catalyzes the formation of the isocyclic ring in chlorophyll biosynthesis. Mediates the cyclase reaction, which results in the formation of divinylprotochlorophyllide (Pchlide) characteristic of all chlorophylls from magnesium-protoporphyrin IX 13-monomethyl ester (MgPMME). The sequence is that of Magnesium-protoporphyrin IX monomethyl ester [oxidative] cyclase 2 from Nostoc sp. (strain PCC 7120 / SAG 25.82 / UTEX 2576).